Here is an 834-residue protein sequence, read N- to C-terminus: DNA-directed RNA polymerase subunit beta' (834 aa).

Cys-88, Cys-90, Cys-104, and Cys-107 together coordinate Zn(2+). The Mg(2+) site is built by Asp-641, Asp-643, and Asp-645.

The protein belongs to the RNA polymerase beta' chain family. RpoC1 subfamily. As to quaternary structure, in plastids the minimal PEP RNA polymerase catalytic core is composed of four subunits: alpha, beta, beta', and beta''. When a (nuclear-encoded) sigma factor is associated with the core the holoenzyme is formed, which can initiate transcription. Requires Mg(2+) as cofactor. It depends on Zn(2+) as a cofactor.

Its subcellular location is the plastid. It catalyses the reaction RNA(n) + a ribonucleoside 5'-triphosphate = RNA(n+1) + diphosphate. Functionally, DNA-dependent RNA polymerase catalyzes the transcription of DNA into RNA using the four ribonucleoside triphosphates as substrates. In Helicosporidium sp. subsp. Simulium jonesii (Green alga), this protein is DNA-directed RNA polymerase subunit beta' (rpoC1).